A 69-amino-acid polypeptide reads, in one-letter code: Cytochrome c oxidase subunit 8A, mitochondrial (69 aa).

Residues 1-25 (MSSLTPLLLRSLTGPARRLMVPRAQ) constitute a mitochondrion transit peptide. The short motif at 2 to 19 (SSLTPLLLRSLTGPARRL) is the SIFI-degron element. Residues 26–36 (VHSKPPREQLG) lie on the Mitochondrial matrix side of the membrane. The helical transmembrane segment at 37–60 (VLDITIGLTSCFVCCLLPAGWVLS) threads the bilayer. The Mitochondrial intermembrane portion of the chain corresponds to 61–69 (HLESYKKRE).

Belongs to the cytochrome c oxidase VIII family. In terms of assembly, component of the cytochrome c oxidase (complex IV, CIV), a multisubunit enzyme composed of 14 subunits. The complex is composed of a catalytic core of 3 subunits MT-CO1, MT-CO2 and MT-CO3, encoded in the mitochondrial DNA, and 11 supernumerary subunits COX4I, COX5A, COX5B, COX6A, COX6B, COX6C, COX7A, COX7B, COX7C, COX8 and NDUFA4, which are encoded in the nuclear genome. The complex exists as a monomer or a dimer and forms supercomplexes (SCs) in the inner mitochondrial membrane with NADH-ubiquinone oxidoreductase (complex I, CI) and ubiquinol-cytochrome c oxidoreductase (cytochrome b-c1 complex, complex III, CIII), resulting in different assemblies (supercomplex SCI(1)III(2)IV(1) and megacomplex MCI(2)III(2)IV(2)). In terms of processing, in response to mitochondrial stress, the precursor protein is ubiquitinated by the SIFI complex in the cytoplasm before mitochondrial import, leading to its degradation. Within the SIFI complex, UBR4 initiates ubiquitin chain that are further elongated or branched by KCMF1.

It is found in the mitochondrion inner membrane. The protein operates within energy metabolism; oxidative phosphorylation. Functionally, component of the cytochrome c oxidase, the last enzyme in the mitochondrial electron transport chain which drives oxidative phosphorylation. The respiratory chain contains 3 multisubunit complexes succinate dehydrogenase (complex II, CII), ubiquinol-cytochrome c oxidoreductase (cytochrome b-c1 complex, complex III, CIII) and cytochrome c oxidase (complex IV, CIV), that cooperate to transfer electrons derived from NADH and succinate to molecular oxygen, creating an electrochemical gradient over the inner membrane that drives transmembrane transport and the ATP synthase. Cytochrome c oxidase is the component of the respiratory chain that catalyzes the reduction of oxygen to water. Electrons originating from reduced cytochrome c in the intermembrane space (IMS) are transferred via the dinuclear copper A center (CU(A)) of subunit 2 and heme A of subunit 1 to the active site in subunit 1, a binuclear center (BNC) formed by heme A3 and copper B (CU(B)). The BNC reduces molecular oxygen to 2 water molecules using 4 electrons from cytochrome c in the IMS and 4 protons from the mitochondrial matrix. The protein is Cytochrome c oxidase subunit 8A, mitochondrial (Cox8a) of Rattus norvegicus (Rat).